Here is a 550-residue protein sequence, read N- to C-terminus: Chaperonin GroEL (550 aa).

Residues 29 to 32 (TAGP), Lys-50, 86 to 90 (DGTTT), Gly-416, and Asp-498 each bind ATP.

This sequence belongs to the chaperonin (HSP60) family. As to quaternary structure, forms a cylinder of 14 subunits composed of two heptameric rings stacked back-to-back. Interacts with the co-chaperonin GroES.

The protein localises to the cytoplasm. It catalyses the reaction ATP + H2O + a folded polypeptide = ADP + phosphate + an unfolded polypeptide.. Together with its co-chaperonin GroES, plays an essential role in assisting protein folding. The GroEL-GroES system forms a nano-cage that allows encapsulation of the non-native substrate proteins and provides a physical environment optimized to promote and accelerate protein folding. This is Chaperonin GroEL from Anaplasma phagocytophilum (strain HZ).